The sequence spans 365 residues: Flagellar P-ring protein (365 aa).

Positions 1 to 19 are cleaved as a signal peptide; the sequence is MMLSLCAIAGLLLAPSIQA.

This sequence belongs to the FlgI family. In terms of assembly, the basal body constitutes a major portion of the flagellar organelle and consists of four rings (L,P,S, and M) mounted on a central rod.

Its subcellular location is the periplasm. It is found in the bacterial flagellum basal body. Functionally, assembles around the rod to form the L-ring and probably protects the motor/basal body from shearing forces during rotation. This Sodalis glossinidius (strain morsitans) protein is Flagellar P-ring protein.